The primary structure comprises 146 residues: Envelope protein OPG155 (146 aa).

A helical; Signal-anchor for type III membrane protein membrane pass occupies residues 1–21 (MNSLSIFFIVVATAAVCLLFI). Topologically, residues 22-146 (QGYSIYENYG…AECQFLKSVL (125 aa)) are intravirion.

This sequence belongs to the orthopoxvirus OPG155 protein family. In terms of assembly, part of a stable entry-fusion complex (EFC) which is at least composed of proteins OPG143, OPG147, OPG155, OPG086, OPG094, OPG107, OPG104, and OPG099. Formation of the viral membrane is necessary for the assembly of the complex. Interacts directly with protein OPG107. Contains two intramolecular disulfide bonds. They are created by the viral disulfide bond formation pathway, a poxvirus-specific pathway that operates on the cytoplasmic side of the MV membranes.

It is found in the virion membrane. Functionally, envelope protein required for virus entry into host cell and for cell-cell fusion (syncytium formation). In Vaccinia virus (strain Ankara) (VACV), this protein is Envelope protein OPG155 (OPG155).